The sequence spans 320 residues: Bifunctional ligase/repressor BirA (320 aa).

Residues Gly22–Gln41 constitute a DNA-binding region (H-T-H motif). Residues Leu66–Glu254 form the BPL/LPL catalytic domain. Biotin is bound by residues Ser89 to Asn91, Gln112, Arg116 to Arg118, and Lys183.

Belongs to the biotin--protein ligase family.

It carries out the reaction biotin + L-lysyl-[protein] + ATP = N(6)-biotinyl-L-lysyl-[protein] + AMP + diphosphate + H(+). In terms of biological role, acts both as a biotin--[acetyl-CoA-carboxylase] ligase and a biotin-operon repressor. In the presence of ATP, BirA activates biotin to form the BirA-biotinyl-5'-adenylate (BirA-bio-5'-AMP or holoBirA) complex. HoloBirA can either transfer the biotinyl moiety to the biotin carboxyl carrier protein (BCCP) subunit of acetyl-CoA carboxylase, or bind to the biotin operator site and inhibit transcription of the operon. In Salmonella typhimurium (strain LT2 / SGSC1412 / ATCC 700720), this protein is Bifunctional ligase/repressor BirA.